Consider the following 232-residue polypeptide: Small ribosomal subunit protein uS3 (232 aa).

A KH type-2 domain is found at 39–107 (VRQFLTKELQ…PAQINIAEVR (69 aa)). The segment at 213-232 (AANAVEPKGDKPKKQRKGRK) is disordered.

This sequence belongs to the universal ribosomal protein uS3 family. As to quaternary structure, part of the 30S ribosomal subunit. Forms a tight complex with proteins S10 and S14.

Functionally, binds the lower part of the 30S subunit head. Binds mRNA in the 70S ribosome, positioning it for translation. The polypeptide is Small ribosomal subunit protein uS3 (Vibrio campbellii (strain ATCC BAA-1116)).